Consider the following 382-residue polypeptide: ATP phosphoribosyltransferase regulatory subunit (382 aa).

The protein belongs to the class-II aminoacyl-tRNA synthetase family. HisZ subfamily. In terms of assembly, heteromultimer composed of HisG and HisZ subunits.

The protein localises to the cytoplasm. The protein operates within amino-acid biosynthesis; L-histidine biosynthesis; L-histidine from 5-phospho-alpha-D-ribose 1-diphosphate: step 1/9. Its function is as follows. Required for the first step of histidine biosynthesis. May allow the feedback regulation of ATP phosphoribosyltransferase activity by histidine. This chain is ATP phosphoribosyltransferase regulatory subunit, found in Acidovorax ebreus (strain TPSY) (Diaphorobacter sp. (strain TPSY)).